Consider the following 84-residue polypeptide: UPF0457 protein BT9727_2307 (84 aa).

It belongs to the UPF0457 family.

This chain is UPF0457 protein BT9727_2307, found in Bacillus thuringiensis subsp. konkukian (strain 97-27).